A 420-amino-acid chain; its full sequence is Innexin-3 (420 aa).

Helical transmembrane passes span 33–53, 104–124, 193–213, and 278–298; these read ATLLAFFSIMVSCKQYVGSAI, WVPIVLAIQAFMFYLPSWIWS, MLYICIKLMYLANVFVQFIIL, and IYLFIWFWFVFVLITTFINTL. Residues 378-405 form a disordered region; it reads NRDFHHGHSTKSTSPGLEEGHHEHLYTP. Residues 395–405 are compositionally biased toward basic and acidic residues; the sequence is EEGHHEHLYTP.

Belongs to the pannexin family. As to quaternary structure, interacts with F-actin. Evenly distributed along the adjoining membranes of the two pm5 pharyngeal muscle cells.

The protein resides in the cell membrane. It is found in the cell junction. The protein localises to the gap junction. Its function is as follows. Structural component of gap junctions. Plays a role in maintaining gap junction activity to promote phayngeal muscle contraction. The polypeptide is Innexin-3 (Caenorhabditis elegans).